A 451-amino-acid chain; its full sequence is Prenyltransferase asqH1 (451 aa).

Residues 14 to 37 (AEDQSTRKVHWGQEGSGQSPEARP) form a disordered region. Residue Glu120 coordinates L-tryptophan. 5 residues coordinate substrate: Arg137, Arg274, Lys276, Tyr278, and Tyr373.

The protein belongs to the tryptophan dimethylallyltransferase family.

The enzyme catalyses quinolinone B + dimethylallyl diphosphate = peniprequinolone + diphosphate. It participates in secondary metabolite biosynthesis. The protein operates within alkaloid biosynthesis. Its pathway is mycotoxin biosynthesis. Functionally, prenyltransferase; part of the gene cluster that mediates the biosynthesis of the aspoquinolone mycotoxins. Within the pathway, the prenyltransferase asqH1 catalyzes the canonical Friedel-Crafts alkylation of quinolinone B with dimethylallyl cation to yield dimethylallyl quinolone. The first step of the pathway is catalyzed by the nonribosomal peptide synthetase asqK that condenses anthranilic acid and O-methyl-L-tyrosine to produce 4'-methoxycyclopeptin. 4'-methoxycyclopeptin is then converted to 4'-methoxydehydrocyclopeptin by the ketoglutarate-dependent dioxygenase asqJ. AsqJ also converts its first product 4'-methoxydehydrocyclopeptin to 4'-methoxycyclopenin. The following conversion of 4'-methoxycyclopenin into 4'-methoxyviridicatin is catalyzed by the cyclopenase asqI. 4'-methoxyviridicatin is the precursor of quinolone natural products, and is further converted to quinolinone B. The prenyltransferase asqH1 then catalyzes the canonical Friedel-Crafts alkylation of quinolinone B with dimethylallyl cation to yield dimethylallyl quinolone, which is subjected to FAD-dependent dehydrogenation by the FAD-linked oxidoreductase asqF to yield conjugated aryl diene. The delta(3') double bond then serves as the site of the second alkylation with DMAPP catalyzed by the prenyltransferase asqH2 to yield a carbenium ion intermediate, which can be attacked by H(2)O to yield a styrenyl quinolone containing a C3'-hydroxyprenyl chain. The FAD-dependent monooxygenase asqG performs epoxidation of the terminal C7'-C8' olefin. Finally, after dehydratation of the epoxide at C3 by asqC, the quinolone epoxide rearrangement protein asqO catalyzes an enzymatic 3-exo-tet cyclization to yield the cyclopropyl-THF ring system in aspoquinolone. The chain is Prenyltransferase asqH1 from Emericella nidulans (strain FGSC A4 / ATCC 38163 / CBS 112.46 / NRRL 194 / M139) (Aspergillus nidulans).